The sequence spans 458 residues: ATP synthase subunit beta (458 aa).

148 to 155 (GGAGVGKT) is a binding site for ATP.

This sequence belongs to the ATPase alpha/beta chains family. In terms of assembly, F-type ATPases have 2 components, CF(1) - the catalytic core - and CF(0) - the membrane proton channel. CF(1) has five subunits: alpha(3), beta(3), gamma(1), delta(1), epsilon(1). CF(0) has three main subunits: a(1), b(2) and c(9-12). The alpha and beta chains form an alternating ring which encloses part of the gamma chain. CF(1) is attached to CF(0) by a central stalk formed by the gamma and epsilon chains, while a peripheral stalk is formed by the delta and b chains.

Its subcellular location is the cell inner membrane. The enzyme catalyses ATP + H2O + 4 H(+)(in) = ADP + phosphate + 5 H(+)(out). In terms of biological role, produces ATP from ADP in the presence of a proton gradient across the membrane. The catalytic sites are hosted primarily by the beta subunits. This is ATP synthase subunit beta from Nitrosococcus oceani (strain ATCC 19707 / BCRC 17464 / JCM 30415 / NCIMB 11848 / C-107).